Here is a 267-residue protein sequence, read N- to C-terminus: tRNA pseudouridine synthase A (267 aa).

D52 functions as the Nucleophile in the catalytic mechanism. Y110 lines the substrate pocket.

Belongs to the tRNA pseudouridine synthase TruA family. In terms of assembly, homodimer.

It carries out the reaction uridine(38/39/40) in tRNA = pseudouridine(38/39/40) in tRNA. Its function is as follows. Formation of pseudouridine at positions 38, 39 and 40 in the anticodon stem and loop of transfer RNAs. The polypeptide is tRNA pseudouridine synthase A (Paraburkholderia phymatum (strain DSM 17167 / CIP 108236 / LMG 21445 / STM815) (Burkholderia phymatum)).